The sequence spans 349 residues: MNKLKETIRMIEELDQETMQKARERVDNLIKPPKSLGRLEDLAVQLAGITKTIHPTVANKAIIVMAADHGVYEEGIAGFPQEITVVQTLNFVKGVTGVCALGKVSGTKIIPVDIGVKEDLDPNAGVLIRKIKYGTDNMAKGPAMSREEAIRALEVGIEVANEEIKNGVTLLGTGEMGIGNTTASTAILSVLGNFDPKEITGRGAGLSPEGIQRKAAVIKRAIEVNQPDATDGIDVVAKVGGLEIAGMAGVMLAAAANRIPVVVDGYIATAAALIAVSLEPKTKQYLIPSHASAEIGSIKATELLGIKPMIHMDLCLGEGSGAALVFPIVEAACHMINCMPTFEEAGITI.

Catalysis depends on E318, which acts as the Proton acceptor.

This sequence belongs to the CobT family.

The enzyme catalyses 5,6-dimethylbenzimidazole + nicotinate beta-D-ribonucleotide = alpha-ribazole 5'-phosphate + nicotinate + H(+). It participates in nucleoside biosynthesis; alpha-ribazole biosynthesis; alpha-ribazole from 5,6-dimethylbenzimidazole: step 1/2. In terms of biological role, catalyzes the synthesis of alpha-ribazole-5'-phosphate from nicotinate mononucleotide (NAMN) and 5,6-dimethylbenzimidazole (DMB). This Alkaliphilus metalliredigens (strain QYMF) protein is Nicotinate-nucleotide--dimethylbenzimidazole phosphoribosyltransferase.